Reading from the N-terminus, the 211-residue chain is Thiamine-phosphate synthase (211 aa).

Residues 37–41 (QLRIK) and Asn69 each bind 4-amino-2-methyl-5-(diphosphooxymethyl)pyrimidine. The Mg(2+) site is built by Asp70 and Asp89. Residue Ser108 participates in 4-amino-2-methyl-5-(diphosphooxymethyl)pyrimidine binding. 2-[(2R,5Z)-2-carboxy-4-methylthiazol-5(2H)-ylidene]ethyl phosphate is bound at residue 134–136 (TQT). Lys137 serves as a coordination point for 4-amino-2-methyl-5-(diphosphooxymethyl)pyrimidine. Residues Gly166 and 186–187 (VS) each bind 2-[(2R,5Z)-2-carboxy-4-methylthiazol-5(2H)-ylidene]ethyl phosphate.

Belongs to the thiamine-phosphate synthase family. Requires Mg(2+) as cofactor.

The enzyme catalyses 2-[(2R,5Z)-2-carboxy-4-methylthiazol-5(2H)-ylidene]ethyl phosphate + 4-amino-2-methyl-5-(diphosphooxymethyl)pyrimidine + 2 H(+) = thiamine phosphate + CO2 + diphosphate. It catalyses the reaction 2-(2-carboxy-4-methylthiazol-5-yl)ethyl phosphate + 4-amino-2-methyl-5-(diphosphooxymethyl)pyrimidine + 2 H(+) = thiamine phosphate + CO2 + diphosphate. It carries out the reaction 4-methyl-5-(2-phosphooxyethyl)-thiazole + 4-amino-2-methyl-5-(diphosphooxymethyl)pyrimidine + H(+) = thiamine phosphate + diphosphate. Its pathway is cofactor biosynthesis; thiamine diphosphate biosynthesis; thiamine phosphate from 4-amino-2-methyl-5-diphosphomethylpyrimidine and 4-methyl-5-(2-phosphoethyl)-thiazole: step 1/1. Its function is as follows. Condenses 4-methyl-5-(beta-hydroxyethyl)thiazole monophosphate (THZ-P) and 2-methyl-4-amino-5-hydroxymethyl pyrimidine pyrophosphate (HMP-PP) to form thiamine monophosphate (TMP). In Escherichia coli O9:H4 (strain HS), this protein is Thiamine-phosphate synthase.